The chain runs to 64 residues: UPF0434 protein Bcep18194_A5877 (64 aa).

This sequence belongs to the UPF0434 family.

This Burkholderia lata (strain ATCC 17760 / DSM 23089 / LMG 22485 / NCIMB 9086 / R18194 / 383) protein is UPF0434 protein Bcep18194_A5877.